Here is a 472-residue protein sequence, read N- to C-terminus: tRNA-2-methylthio-N(6)-dimethylallyladenosine synthase (472 aa).

The tract at residues 1–24 (MTGTPDVFPPATPGGAPLVALPAG) is disordered. An MTTase N-terminal domain is found at 33-150 (GKLYIKTHGC…LPELIRARRE (118 aa)). Residues cysteine 42, cysteine 79, cysteine 113, cysteine 187, cysteine 191, and cysteine 194 each coordinate [4Fe-4S] cluster. The 235-residue stretch at 173–407 (RAEGASAFVS…RINAHAAGIS (235 aa)) folds into the Radical SAM core domain. The TRAM domain maps to 408-471 (EKMVGTVQTV…TNSLRARVVA (64 aa)).

Belongs to the methylthiotransferase family. MiaB subfamily. Monomer. The cofactor is [4Fe-4S] cluster.

The protein resides in the cytoplasm. It carries out the reaction N(6)-dimethylallyladenosine(37) in tRNA + (sulfur carrier)-SH + AH2 + 2 S-adenosyl-L-methionine = 2-methylsulfanyl-N(6)-dimethylallyladenosine(37) in tRNA + (sulfur carrier)-H + 5'-deoxyadenosine + L-methionine + A + S-adenosyl-L-homocysteine + 2 H(+). Its function is as follows. Catalyzes the methylthiolation of N6-(dimethylallyl)adenosine (i(6)A), leading to the formation of 2-methylthio-N6-(dimethylallyl)adenosine (ms(2)i(6)A) at position 37 in tRNAs that read codons beginning with uridine. This chain is tRNA-2-methylthio-N(6)-dimethylallyladenosine synthase, found in Stenotrophomonas maltophilia (strain K279a).